Consider the following 413-residue polypeptide: 2,3-bisphosphoglycerate-independent phosphoglycerate mutase (413 aa).

This sequence belongs to the BPG-independent phosphoglycerate mutase family. A-PGAM subfamily.

It carries out the reaction (2R)-2-phosphoglycerate = (2R)-3-phosphoglycerate. The protein operates within carbohydrate degradation; glycolysis; pyruvate from D-glyceraldehyde 3-phosphate: step 3/5. Catalyzes the interconversion of 2-phosphoglycerate and 3-phosphoglycerate. The protein is 2,3-bisphosphoglycerate-independent phosphoglycerate mutase of Metallosphaera sedula (strain ATCC 51363 / DSM 5348 / JCM 9185 / NBRC 15509 / TH2).